The following is a 312-amino-acid chain: Pyridoxal kinase (312 aa).

The residue at position 1 (M1) is an N-acetylmethionine. Pyridoxal is bound by residues S12 and T47. T47 provides a ligand contact to pyridoxal 5'-phosphate. S59 carries the post-translational modification Phosphoserine. D113 lines the ATP pocket. Na(+) is bound at residue D113. D118 contacts Mg(2+). T148 is a binding site for Na(+). 150–153 (NQFE) serves as a coordination point for ATP. Residue S164 is modified to Phosphoserine. Na(+) is bound at residue T186. 186-187 (TS) is a binding site for ATP. S213 carries the phosphoserine modification. ATP contacts are provided by residues 226–228 (VDA) and T233. Position 234–235 (234–235 (GD)) interacts with pyridoxal 5'-phosphate. Residue D235 is the Proton acceptor of the active site. S285 bears the Phosphoserine mark.

This sequence belongs to the pyridoxine kinase family. Homodimer. The cofactor is Mg(2+). Zn(2+) is required as a cofactor. Co(2+) serves as cofactor. Requires Mn(2+) as cofactor. Ubiquitous. Highly expressed in testis. In terms of tissue distribution, in adult testis and spermatozoa.

Its subcellular location is the cytoplasm. It localises to the cytosol. It catalyses the reaction pyridoxal + ATP = pyridoxal 5'-phosphate + ADP + H(+). The enzyme catalyses pyridoxamine + ATP = pyridoxamine 5'-phosphate + ADP + H(+). The catalysed reaction is pyridoxine + ATP = pyridoxine 5'-phosphate + ADP + H(+). It functions in the pathway cofactor metabolism; pyridoxal 5'-phosphate salvage; pyridoxal 5'-phosphate from pyridoxal: step 1/1. It participates in cofactor metabolism; pyridoxal 5'-phosphate salvage; pyridoxine 5'-phosphate from pyridoxine: step 1/1. The protein operates within cofactor metabolism; pyridoxal 5'-phosphate salvage; pyridoxamine 5'-phosphate from pyridoxamine: step 1/1. With respect to regulation, catalytic activity is inhibited competitively by 4-deoxypyridoxine, and is also inhibited by the benzodiazepine receptor ligands 1012S and ethyl-beta-carboline-3-carboxylate. Inhibited by ginkgotoxin, theophylline, lamotrigine, enprofylline, theobromine, and caffeine. Activity is increased in the presence of K(+)or Na(+). Catalyzes the phosphorylation of the dietary vitamin B6 vitamers pyridoxal (PL), pyridoxine (PN) and pyridoxamine (PM) to form pyridoxal 5'-phosphate (PLP), pyridoxine 5'-phosphate (PNP) and pyridoxamine 5'-phosphate (PMP), respectively. PLP is the active form of vitamin B6, and acts as a cofactor for over 140 different enzymatic reactions. The protein is Pyridoxal kinase of Homo sapiens (Human).